Here is a 276-residue protein sequence, read N- to C-terminus: 4-hydroxy-3-methylbut-2-enyl diphosphate reductase (276 aa).

Cys12 serves as a coordination point for [4Fe-4S] cluster. Positions 36 and 70 each coordinate (2E)-4-hydroxy-3-methylbut-2-enyl diphosphate. Dimethylallyl diphosphate is bound by residues His36 and His70. Positions 36 and 70 each coordinate isopentenyl diphosphate. Residue Cys92 coordinates [4Fe-4S] cluster. His120 contacts (2E)-4-hydroxy-3-methylbut-2-enyl diphosphate. His120 provides a ligand contact to dimethylallyl diphosphate. His120 contacts isopentenyl diphosphate. Catalysis depends on Glu122, which acts as the Proton donor. Thr158 lines the (2E)-4-hydroxy-3-methylbut-2-enyl diphosphate pocket. Residue Cys186 coordinates [4Fe-4S] cluster. 4 residues coordinate (2E)-4-hydroxy-3-methylbut-2-enyl diphosphate: Ser214, Ser215, Asn216, and Ser258. The dimethylallyl diphosphate site is built by Ser214, Ser215, Asn216, and Ser258. Isopentenyl diphosphate contacts are provided by Ser214, Ser215, Asn216, and Ser258.

It belongs to the IspH family. It depends on [4Fe-4S] cluster as a cofactor.

It carries out the reaction isopentenyl diphosphate + 2 oxidized [2Fe-2S]-[ferredoxin] + H2O = (2E)-4-hydroxy-3-methylbut-2-enyl diphosphate + 2 reduced [2Fe-2S]-[ferredoxin] + 2 H(+). The catalysed reaction is dimethylallyl diphosphate + 2 oxidized [2Fe-2S]-[ferredoxin] + H2O = (2E)-4-hydroxy-3-methylbut-2-enyl diphosphate + 2 reduced [2Fe-2S]-[ferredoxin] + 2 H(+). The protein operates within isoprenoid biosynthesis; dimethylallyl diphosphate biosynthesis; dimethylallyl diphosphate from (2E)-4-hydroxy-3-methylbutenyl diphosphate: step 1/1. Its pathway is isoprenoid biosynthesis; isopentenyl diphosphate biosynthesis via DXP pathway; isopentenyl diphosphate from 1-deoxy-D-xylulose 5-phosphate: step 6/6. Catalyzes the conversion of 1-hydroxy-2-methyl-2-(E)-butenyl 4-diphosphate (HMBPP) into a mixture of isopentenyl diphosphate (IPP) and dimethylallyl diphosphate (DMAPP). Acts in the terminal step of the DOXP/MEP pathway for isoprenoid precursor biosynthesis. The chain is 4-hydroxy-3-methylbut-2-enyl diphosphate reductase from Wolinella succinogenes (strain ATCC 29543 / DSM 1740 / CCUG 13145 / JCM 31913 / LMG 7466 / NCTC 11488 / FDC 602W) (Vibrio succinogenes).